A 167-amino-acid polypeptide reads, in one-letter code: Photosystem I assembly protein Ycf3 (167 aa).

TPR repeat units lie at residues 35 to 68, 72 to 105, and 120 to 153; these read AFAY…EVDA, SYIL…NPSL, and GEQA…APTN.

It belongs to the Ycf3 family.

It is found in the plastid. It localises to the chloroplast thylakoid membrane. Essential for the assembly of the photosystem I (PSI) complex. May act as a chaperone-like factor to guide the assembly of the PSI subunits. The chain is Photosystem I assembly protein Ycf3 from Stigeoclonium helveticum (Green alga).